The chain runs to 431 residues: REST corepressor 1 (431 aa).

The segment covering 1–10 (MIEKGAEISG) has biased composition (basic and acidic residues). Residues 1 to 53 (MIEKGAEISGKRRGRNNAANSKSLGTNVNGSNSWEEGSSSSSSDDEPGGGGMR) are disordered. Polar residues predominate over residues 17–28 (NAANSKSLGTNV). The segment covering 29-42 (NGSNSWEEGSSSSS) has biased composition (low complexity). In terms of domain architecture, ELM2 spans 50 to 135 (GGMRVGLQYQ…KSLADLLNFT (86 aa)). The SANT 1 domain maps to 136 to 187 (PFPDEWTVEDRVLFEQAFSFHGKTFHRIQQMLPDKSIASLVKFYYSWKKTRS). The interval 190 to 262 (SVMDRHARKQ…NRAKRKPPNG (73 aa)) is disordered. Residues 224-242 (EQPKEAKKEVPKNDTVPHI) are compositionally biased toward basic and acidic residues. Residues 267-314 (QEDVEAVSANANAATTVLRQLDMELVSIKRQIQNIKQTNSAFKEKLQG) adopt a coiled-coil conformation. Residues 327–378 (KFNARWTTEEQLLAVQAIRMYGRDFQAISDVIGNKSVVQVKNFFVNYRRRFN) enclose the SANT 2 domain.

This sequence belongs to the CoREST family. Component of a BHC histone deacetylase complex that contains KDM1A. In terms of tissue distribution, expressed in territories in which neurogenesis takes place.

Its subcellular location is the nucleus. Functionally, essential component of the BHC complex, a corepressor complex that represses transcription of neuron-specific genes in non-neuronal cells. The BHC complex is recruited at RE1/NRSE sites by REST and acts by deacetylating and demethylating specific sites on histones, thereby acting as a chromatin modifier. In the BHC complex, it serves as a molecular beacon for the recruitment of molecular machinery that imposes silencing across a chromosomal interval. Plays a central role in demethylation of Lys-4 of histone H3 by promoting demethylase activity of KDM1A on core histones and nucleosomal substrates. The protein is REST corepressor 1 (rcor1) of Xenopus laevis (African clawed frog).